Reading from the N-terminus, the 315-residue chain is Homoserine kinase (315 aa).

Pro91–Ser101 serves as a coordination point for ATP.

The protein belongs to the GHMP kinase family. Homoserine kinase subfamily.

The protein resides in the cytoplasm. The catalysed reaction is L-homoserine + ATP = O-phospho-L-homoserine + ADP + H(+). The protein operates within amino-acid biosynthesis; L-threonine biosynthesis; L-threonine from L-aspartate: step 4/5. In terms of biological role, catalyzes the ATP-dependent phosphorylation of L-homoserine to L-homoserine phosphate. The polypeptide is Homoserine kinase (Buchnera aphidicola subsp. Cinara cedri (strain Cc)).